The following is an 871-amino-acid chain: Translation initiation factor IF-2 (871 aa).

Disordered stretches follow at residues 60 to 101 and 184 to 203; these read KKNI…QEVK and ESLKKKKKEKKSFVASKKES. Residues 61–72 show a composition bias toward basic residues; the sequence is KNIKTPTAKKPK. The segment covering 73–101 has biased composition (basic and acidic residues); sequence KENIKEQEKLNESEKKEPKKEEKLKQEVK. One can recognise a tr-type G domain in the interval 370 to 537; the sequence is TRAPVITIMG…IVLLQADILE (168 aa). A G1 region spans residues 379–386; sequence GHVDHGKT. 379-386 lines the GTP pocket; it reads GHVDHGKT. Positions 404-408 are G2; it reads GITQH. The segment at 425 to 428 is G3; that stretch reads DTPG. Residues 425 to 429 and 479 to 482 each bind GTP; these read DTPGH and NKMD. Residues 479–482 are G4; that stretch reads NKMD. A G5 region spans residues 515-517; it reads SAK.

It belongs to the TRAFAC class translation factor GTPase superfamily. Classic translation factor GTPase family. IF-2 subfamily.

The protein localises to the cytoplasm. Functionally, one of the essential components for the initiation of protein synthesis. Protects formylmethionyl-tRNA from spontaneous hydrolysis and promotes its binding to the 30S ribosomal subunits. Also involved in the hydrolysis of GTP during the formation of the 70S ribosomal complex. This is Translation initiation factor IF-2 from Campylobacter jejuni subsp. jejuni serotype O:6 (strain 81116 / NCTC 11828).